The following is a 328-amino-acid chain: dTDP-4-dehydrorhamnose 3,5-epimerase (328 aa).

Residues R23, E28, 46–48 (QEN), and R58 each bind substrate. The active-site Proton acceptor is the H61. Residues K70 and H117 each contribute to the substrate site. Y130 (proton donor) is an active-site residue. Substrate contacts are provided by E141 and K166.

It belongs to the dTDP-4-dehydrorhamnose 3,5-epimerase family. As to quaternary structure, homodimer.

It carries out the reaction dTDP-4-dehydro-6-deoxy-alpha-D-glucose = dTDP-4-dehydro-beta-L-rhamnose. Its pathway is carbohydrate biosynthesis; dTDP-L-rhamnose biosynthesis. The protein operates within bacterial outer membrane biogenesis; LPS O-antigen biosynthesis. Its function is as follows. Catalyzes the epimerization of the C3' and C5'positions of dTDP-6-deoxy-D-xylo-4-hexulose, forming dTDP-6-deoxy-L-lyxo-4-hexulose. The sequence is that of dTDP-4-dehydrorhamnose 3,5-epimerase (rfbC) from Neisseria gonorrhoeae.